The primary structure comprises 514 residues: Citrate synthase 2, peroxisomal (514 aa).

Residues H324, H363, and D419 contribute to the active site.

The protein belongs to the citrate synthase family. Widely expressed. Expressed throughout the shoot. Expressed in flower, silique, stem, cauline leaf, young leaf, mature leaf and senescent leaf.

Its subcellular location is the peroxisome. The enzyme catalyses oxaloacetate + acetyl-CoA + H2O = citrate + CoA + H(+). It functions in the pathway carbohydrate metabolism; tricarboxylic acid cycle; isocitrate from oxaloacetate: step 1/2. Peroxisomal citrate synthase required for the fatty acid respiration in seedlings, citrate being exported from peroxisomes into mitochondria during respiration of triacylglycerol (TAG). Indeed, complete respiration requires the transfer of carbon in the form of citrate from the peroxisome to the mitochondria. This Arabidopsis thaliana (Mouse-ear cress) protein is Citrate synthase 2, peroxisomal (CSY2).